The primary structure comprises 262 residues: Shikimate dehydrogenase (NADP(+)) (262 aa).

Residues 13–15 (SLS) and threonine 59 contribute to the shikimate site. The Proton acceptor role is filled by lysine 63. Residue aspartate 75 participates in NADP(+) binding. 2 residues coordinate shikimate: asparagine 84 and aspartate 99. NADP(+) is bound by residues 122–126 (GAGGA), 144–149 (NRTLEK), and methionine 205. Shikimate is bound at residue tyrosine 207. Position 228 (glycine 228) interacts with NADP(+).

The protein belongs to the shikimate dehydrogenase family. As to quaternary structure, homodimer.

It catalyses the reaction shikimate + NADP(+) = 3-dehydroshikimate + NADPH + H(+). The protein operates within metabolic intermediate biosynthesis; chorismate biosynthesis; chorismate from D-erythrose 4-phosphate and phosphoenolpyruvate: step 4/7. In terms of biological role, involved in the biosynthesis of the chorismate, which leads to the biosynthesis of aromatic amino acids. Catalyzes the reversible NADPH linked reduction of 3-dehydroshikimate (DHSA) to yield shikimate (SA). This chain is Shikimate dehydrogenase (NADP(+)), found in Ignicoccus hospitalis (strain KIN4/I / DSM 18386 / JCM 14125).